Reading from the N-terminus, the 74-residue chain is Large ribosomal subunit protein bL28 (74 aa).

It belongs to the bacterial ribosomal protein bL28 family.

This is Large ribosomal subunit protein bL28 from Buchnera aphidicola subsp. Baizongia pistaciae (strain Bp).